Here is a 436-residue protein sequence, read N- to C-terminus: Histone acetyltransferase RTT109 (436 aa).

A Rtt109-type HAT domain is found at 2-404 (SLNDFLSSVL…LQSLTGKREH (403 aa)). Acetyl-CoA is bound by residues 88 to 90 (ADT) and 97 to 101 (RVSVR). The interaction with VPS75 stretch occupies residues 128–170 (RSYKKISPELISAASTPARTLRILARRLKQSGSTVLKEIESPR). Acetyl-CoA is bound by residues F192, A196, 211–213 (HIL), and W221. Residue D288 is the Proton donor/acceptor of the active site. Position 290 is an N6-acetyllysine; by autocatalysis (K290). The interval 419–433 (LAITMLKPRKKAKAL) is interaction with ASF1.

The protein belongs to the RTT109 family. In terms of assembly, forms a complex composed of two RTT109 subunits and one VPS75 homodimer; each RTT109 subunit interacts predominantly with VPS75 instead of interacting with the other RTT109 subunit. Interacts with VPS75; the interaction is direct. Interacts (via C-terminus) with ASF1; the interaction is direct. Interacts with histone H3/H4 heterodimers via histone H3.

It localises to the nucleus. It carries out the reaction L-lysyl-[histone] + acetyl-CoA = N(6)-acetyl-L-lysyl-[histone] + CoA + H(+). The catalysed reaction is L-lysyl-[protein] + acetyl-CoA = N(6)-acetyl-L-lysyl-[protein] + CoA + H(+). In terms of biological role, histone chaperone-dependent acetylase that modifies 'Lys-9', 'Lys-14', 'Lys-23', 'Lys-27', and 'Lys-56' on histone H3 (H3K9Ac, H3K14Ac and H3K23Ac, H3K27Ac, and H3K56Ac) to promote nucleosome assembly, genomic stability, DNA repair and transcriptional regulation during mitotic S-phase. Its residue selectivity is influenced by the acetylation status of histone H3, and also the presence of histone chaperone ASF1 that shifts selectivity to 'Lys-56' when H3K14Ac is already present. H3K56 acetylation weakens the interaction between the histone core and the surrounding DNA in the nucleosomal particle and drives chromatin disassembly. Autoacetylates. Independently of acetyltransferase activity, stimulates histone deposition by VPS75. Involved in regulation of Ty1 transposition. The polypeptide is Histone acetyltransferase RTT109 (Saccharomyces cerevisiae (strain ATCC 204508 / S288c) (Baker's yeast)).